Reading from the N-terminus, the 601-residue chain is MMRSRSKSPRRPSPTARGANCDVELLKTTTRDREELKCMLEKYERHLAEIQGNVKVLTSERDKTFLLYEQAQEEIARLRREMKSLARKAMDTESELGRQKAENNSLRLLYENTEKDLSDTQRHLAKKKYELQLTQEKIMCLDEKIDNFTRQNIAQREEISILGGTLNDLAKEKECLQACLDKKSENIASLGESLAMKEKTISGMKNIIAEMEQASRQSTEALIMCEQDISRMRRQLDETNDELAQIARERDILAHDNDNLQEQFAKAKQENQALSKKLNDTHNELNDIKQKVQDTNLEVNKLKNILKSEESENRQMMEQLRKANEDAENWENKARQSEADNNTLKLELITAEAEGNRLKEKVDSLSREVEQHLNAERSYKSQISTLHKSVVKMEEELQKVQFEKVSALADLSSTRELCIKLDSSKELLNRQLVAKDQEIEMMENELDSARSEIELLRSQMTNERISMQNLEALLVANRDKEYQSQIALQEKESEIQLLKEHLCLAENKMAIQSRDVAQFRNVVTQLEADLDITKRQLGTERFERERAVQELRRQNYSSNAYHVSSTMKPNTKCHSPERAHHRSPDRGLDRSLEENLCYRDF.

Positions 1-10 (MMRSRSKSPR) are enriched in basic residues. Disordered stretches follow at residues 1 to 20 (MMRS…RGAN) and 563 to 588 (VSST…DRGL). Positions 459–592 (QMTNERISMQ…SPDRGLDRSL (134 aa)) are interaction with HIF1A. Positions 563–573 (VSSTMKPNTKC) are enriched in polar residues. A compositionally biased stretch (basic and acidic residues) spans 574 to 588 (HSPERAHHRSPDRGL). Residue Ser-591 is modified to Phosphoserine.

The protein belongs to the CEP135/TSGA10 family. In terms of assembly, interacts with HIF1A. In terms of processing, processed into N-terminal 27-kDa and C-terminal 55-kDa fragments.

Its subcellular location is the cytoplasm. The protein localises to the cytoskeleton. The protein resides in the microtubule organizing center. It localises to the centrosome. It is found in the centriole. Plays a role in spermatogenesis. When overexpressed, prevents nuclear localization of HIF1A. The sequence is that of Testis-specific gene 10 protein (TSGA10) from Macaca fascicularis (Crab-eating macaque).